Here is a 322-residue protein sequence, read N- to C-terminus: tRNA dimethylallyltransferase (322 aa).

ATP is bound at residue 19–26 (GPTASGKT). Residue 21–26 (TASGKT) participates in substrate binding. 3 interaction with substrate tRNA regions span residues 44-47 (DSAL), 168-172 (QRIQR), and 255-260 (RCVGYR).

The protein belongs to the IPP transferase family. In terms of assembly, monomer. It depends on Mg(2+) as a cofactor.

The catalysed reaction is adenosine(37) in tRNA + dimethylallyl diphosphate = N(6)-dimethylallyladenosine(37) in tRNA + diphosphate. Catalyzes the transfer of a dimethylallyl group onto the adenine at position 37 in tRNAs that read codons beginning with uridine, leading to the formation of N6-(dimethylallyl)adenosine (i(6)A). This Cupriavidus necator (strain ATCC 17699 / DSM 428 / KCTC 22496 / NCIMB 10442 / H16 / Stanier 337) (Ralstonia eutropha) protein is tRNA dimethylallyltransferase.